Reading from the N-terminus, the 370-residue chain is Dual-specificity RNA methyltransferase RlmN (370 aa).

Residue Glu-93 is the Proton acceptor of the active site. One can recognise a Radical SAM core domain in the interval 99–331; that stretch reads DRKRGTLCVS…TRVRRTRGDD (233 aa). The cysteines at positions 106 and 336 are disulfide-linked. [4Fe-4S] cluster contacts are provided by Cys-113, Cys-117, and Cys-120. S-adenosyl-L-methionine contacts are provided by residues 162–163, Ser-194, 216–218, and Asn-293; these read GE and SLH. Residue Cys-336 is the S-methylcysteine intermediate of the active site.

It belongs to the radical SAM superfamily. RlmN family. [4Fe-4S] cluster serves as cofactor.

Its subcellular location is the cytoplasm. It catalyses the reaction adenosine(2503) in 23S rRNA + 2 reduced [2Fe-2S]-[ferredoxin] + 2 S-adenosyl-L-methionine = 2-methyladenosine(2503) in 23S rRNA + 5'-deoxyadenosine + L-methionine + 2 oxidized [2Fe-2S]-[ferredoxin] + S-adenosyl-L-homocysteine. The enzyme catalyses adenosine(37) in tRNA + 2 reduced [2Fe-2S]-[ferredoxin] + 2 S-adenosyl-L-methionine = 2-methyladenosine(37) in tRNA + 5'-deoxyadenosine + L-methionine + 2 oxidized [2Fe-2S]-[ferredoxin] + S-adenosyl-L-homocysteine. In terms of biological role, specifically methylates position 2 of adenine 2503 in 23S rRNA and position 2 of adenine 37 in tRNAs. m2A2503 modification seems to play a crucial role in the proofreading step occurring at the peptidyl transferase center and thus would serve to optimize ribosomal fidelity. The sequence is that of Dual-specificity RNA methyltransferase RlmN from Coxiella burnetii (strain CbuK_Q154) (Coxiella burnetii (strain Q154)).